A 296-amino-acid polypeptide reads, in one-letter code: Protein ea31 (296 aa).

The sequence is that of Protein ea31 (ea31) from Escherichia phage lambda (Bacteriophage lambda).